Reading from the N-terminus, the 499-residue chain is Ent-kaurenoic acid oxidase 1 (499 aa).

A helical transmembrane segment spans residues 5 to 25 (AWWAVAAVVAALAVVALDAAV). Cys443 is a binding site for heme.

It belongs to the cytochrome P450 family. The cofactor is heme.

The protein resides in the endoplasmic reticulum membrane. It catalyses the reaction ent-kaur-16-en-19-oate + 3 reduced [NADPH--hemoprotein reductase] + 3 O2 = gibberellin A12 + 3 oxidized [NADPH--hemoprotein reductase] + 4 H2O + 4 H(+). The catalysed reaction is ent-kaur-16-en-19-oate + reduced [NADPH--hemoprotein reductase] + O2 = ent-7alpha-hydroxykaur-16-en-19-oate + oxidized [NADPH--hemoprotein reductase] + H2O + H(+). It carries out the reaction ent-7alpha-hydroxykaur-16-en-19-oate + reduced [NADPH--hemoprotein reductase] + O2 = gibberellin A12 aldehyde + oxidized [NADPH--hemoprotein reductase] + 2 H2O + H(+). The enzyme catalyses gibberellin A12 aldehyde + reduced [NADPH--hemoprotein reductase] + O2 = gibberellin A12 + oxidized [NADPH--hemoprotein reductase] + H2O + 2 H(+). Its pathway is plant hormone biosynthesis; gibberellin biosynthesis. Functionally, catalyzes three successive oxidations of ent-kaurenoic acid giving gibberellin 12 (GA12), a key step in gibberellins (GAs) biosynthesis. GAs, which are involved many processes, including stem elongation, play a central role in plant development. In Hordeum vulgare (Barley), this protein is Ent-kaurenoic acid oxidase 1.